The chain runs to 560 residues: Dimethylaniline monooxygenase [N-oxide-forming] 4 (560 aa).

Residues 9 to 13 (GAGVS), Glu-32, and 40 to 41 (LW) contribute to the FAD site. NADP(+) contacts are provided by residues 60-61 (TN) and 195-198 (TGGD). A helical membrane pass occupies residues 510–530 (LSHYLIAWGAPVLLVSLLLIY).

This sequence belongs to the FMO family. Requires FAD as cofactor.

It localises to the microsome membrane. The protein resides in the endoplasmic reticulum membrane. It carries out the reaction N,N-dimethylaniline + NADPH + O2 + H(+) = N,N-dimethylaniline N-oxide + NADP(+) + H2O. This protein is involved in the oxidative metabolism of a variety of xenobiotics such as drugs and pesticides. The chain is Dimethylaniline monooxygenase [N-oxide-forming] 4 (Fmo4) from Mus musculus (Mouse).